The sequence spans 388 residues: GTPase Obg (388 aa).

The Obg domain occupies 1–159; sequence MKFVDEANIR…RSIKLELLLL (159 aa). The OBG-type G domain occupies 160–333; that stretch reads ADVGLLGMPN…LSIKMLDYIR (174 aa). GTP-binding positions include 166-173, 191-195, 213-216, 283-286, and 314-316; these read GMPNAGKS, FTTLV, DIPG, NKTD, and SAY. Mg(2+) contacts are provided by serine 173 and threonine 193.

Belongs to the TRAFAC class OBG-HflX-like GTPase superfamily. OBG GTPase family. In terms of assembly, monomer. Mg(2+) is required as a cofactor.

The protein resides in the cytoplasm. In terms of biological role, an essential GTPase which binds GTP, GDP and possibly (p)ppGpp with moderate affinity, with high nucleotide exchange rates and a fairly low GTP hydrolysis rate. Plays a role in control of the cell cycle, stress response, ribosome biogenesis and in those bacteria that undergo differentiation, in morphogenesis control. The polypeptide is GTPase Obg (Shewanella frigidimarina (strain NCIMB 400)).